A 374-amino-acid chain; its full sequence is AA14 family lytic polysaccharide monooxygenase B (374 aa).

The N-terminal stretch at 1–18 (MIPVFLAAIAVFLPLTSG) is a signal peptide. N-linked (GlcNAc...) asparagine glycans are attached at residues Asn-31, Asn-49, Asn-94, and Asn-151. Cystine bridges form between Cys-85–Cys-108, Cys-127–Cys-154, Cys-171–Cys-176, Cys-178–Cys-200, and Cys-220–Cys-236. N-linked (GlcNAc...) asparagine glycans are attached at residues Asn-235 and Asn-315. The tract at residues 306–374 (ISNATPAPSN…TQSRKMRYVF (69 aa)) is disordered. Over residues 313–344 (PSNGSCSSRPPSSPVSSSAASTTTSRSPRPSA) the composition is skewed to low complexity.

The protein belongs to the polysaccharide monooxygenase AA14 family. Cu(2+) serves as cofactor.

Its subcellular location is the secreted. Lytic polysaccharide monooxygenase (LPMO) that oxidatively cleaves xylan with both C1 and C4 regioselectivity and that specifically targets the protective shield made by heteroxylans that cover cellulose microfibrils in wood. Catalysis by LPMOs requires the reduction of the active-site copper from Cu(II) to Cu(I) by a reducing agent and H(2)O(2) or O(2) as a cosubstrate. Cleavage occurs only when xylans are bound to cellulose and not when they are in solution. Increases the efficiency of wood saccharification through oxidative cleavage of highly refractory xylan-coated cellulose fibers via synergistic relationship with xylan-active enzymes, xylobiohydrolases and cellobiohydrolases. The chain is AA14 family lytic polysaccharide monooxygenase B from Pycnoporus cinnabarinus (Cinnabar-red polypore).